Consider the following 319-residue polypeptide: 4-hydroxy-3-methylbut-2-enyl diphosphate reductase (319 aa).

Residue cysteine 17 participates in [4Fe-4S] cluster binding. Histidine 46 and histidine 79 together coordinate (2E)-4-hydroxy-3-methylbut-2-enyl diphosphate. Residues histidine 46 and histidine 79 each coordinate dimethylallyl diphosphate. Residues histidine 46 and histidine 79 each contribute to the isopentenyl diphosphate site. Cysteine 101 lines the [4Fe-4S] cluster pocket. Histidine 129 serves as a coordination point for (2E)-4-hydroxy-3-methylbut-2-enyl diphosphate. Histidine 129 provides a ligand contact to dimethylallyl diphosphate. Isopentenyl diphosphate is bound at residue histidine 129. Residue glutamate 131 is the Proton donor of the active site. Threonine 170 is a binding site for (2E)-4-hydroxy-3-methylbut-2-enyl diphosphate. Cysteine 200 lines the [4Fe-4S] cluster pocket. The (2E)-4-hydroxy-3-methylbut-2-enyl diphosphate site is built by serine 228, serine 229, asparagine 230, and serine 273. Dimethylallyl diphosphate contacts are provided by serine 228, serine 229, asparagine 230, and serine 273. 4 residues coordinate isopentenyl diphosphate: serine 228, serine 229, asparagine 230, and serine 273.

It belongs to the IspH family. [4Fe-4S] cluster serves as cofactor.

It carries out the reaction isopentenyl diphosphate + 2 oxidized [2Fe-2S]-[ferredoxin] + H2O = (2E)-4-hydroxy-3-methylbut-2-enyl diphosphate + 2 reduced [2Fe-2S]-[ferredoxin] + 2 H(+). It catalyses the reaction dimethylallyl diphosphate + 2 oxidized [2Fe-2S]-[ferredoxin] + H2O = (2E)-4-hydroxy-3-methylbut-2-enyl diphosphate + 2 reduced [2Fe-2S]-[ferredoxin] + 2 H(+). The protein operates within isoprenoid biosynthesis; dimethylallyl diphosphate biosynthesis; dimethylallyl diphosphate from (2E)-4-hydroxy-3-methylbutenyl diphosphate: step 1/1. It participates in isoprenoid biosynthesis; isopentenyl diphosphate biosynthesis via DXP pathway; isopentenyl diphosphate from 1-deoxy-D-xylulose 5-phosphate: step 6/6. Functionally, catalyzes the conversion of 1-hydroxy-2-methyl-2-(E)-butenyl 4-diphosphate (HMBPP) into a mixture of isopentenyl diphosphate (IPP) and dimethylallyl diphosphate (DMAPP). Acts in the terminal step of the DOXP/MEP pathway for isoprenoid precursor biosynthesis. The chain is 4-hydroxy-3-methylbut-2-enyl diphosphate reductase from Cereibacter sphaeroides (strain ATCC 17025 / ATH 2.4.3) (Rhodobacter sphaeroides).